A 408-amino-acid polypeptide reads, in one-letter code: Aminoacylase-1 (408 aa).

Histidine 80 serves as a coordination point for Zn(2+). Aspartate 82 is an active-site residue. Residue aspartate 113 coordinates Zn(2+). Glutamate 147 acts as the Proton acceptor in catalysis. Positions 148, 175, and 373 each coordinate Zn(2+).

Belongs to the peptidase M20A family. In terms of assembly, homodimer. Interacts with SPHK1. Requires Zn(2+) as cofactor.

It is found in the cytoplasm. The catalysed reaction is an N-acyl-L-amino acid + H2O = an L-alpha-amino acid + a carboxylate. It carries out the reaction N-acetyl-L-methionine + H2O = L-methionine + acetate. The enzyme catalyses N-acetyl-L-glutamine + H2O = L-glutamine + acetate. In terms of biological role, catalyzes the hydrolysis of N-acetylated amino acids to acetate and free amino acids. The polypeptide is Aminoacylase-1 (Acy1) (Mus musculus (Mouse)).